The primary structure comprises 804 residues: MSKLSFRARALDAAKPLPIYRGKDMPDLNDCVSINRAVPQMPTGMEKEEESEHHLQRAISAQQVFREKKESMVIPVPEAESNVHYYSRLYKGEFKQPKQFIHIQPFNLDYEQPDYDMDSEDETLLNRLNRKMEIKPLQFEIMIDRLEKASSNQLVTLQEAKLLLNEDDYLIKSVYDYWVRKRKNCRGPSLIPQVKQEKRDGSTNNDPYVAFRRRTEKMQTRKNRKNDEVSYEKMLKLRREFSRAITILEMIKRREKTKRELLHLTLEVVEKRYNLGDFGGEILNEIKIPKVEKEIHVIPPSLHNGNHHKVPECKVKNTHHPSVKDEVLEIVRLKKKYPKKPKAETLVTPQPQATSEPLAVINKSDIKQYDFQSSDDDEFPQVPSPLSELEEENDPDGSYAFRRRTGCQYYAPRLDQMNDTPETTDLSGLARHRYRHCLTTLTVPRRCIGFARKRLGRGGRVIMDRLSTEHDSILKQIDPEMLSGFSSSSHVAQPPSSPSRTNASDRHCENRLSLPEILSNIKSCRLQCFQPRLLHTQDSDREECTSRLGQAVNVKRVSAALLNTSKNGITVTGGITEEQFQTHQQQLVQMQRQQLAQLQQKQQSQQSLQQSHPKAQGSAKSDCMSKTLDSASALFAASAVVNSPTPGRSEVNKDQNAGHSNLNGVVQPSGTAKTLYSTNMALSSSPGISTVQLVRTVGHPTTNHLIPTLCTSNPQTLTMGNSCLANTVHLNNVSVVSPVNVHINTRTSAPSPTALKLATVAASMDRVPKVTPSSAISSIARENHEPERLGLNGIADTTVAMEVT.

Disordered regions lie at residues 372-398 (QSSD…PDGS), 484-507 (GFSS…SDRH), 602-623 (QQSQ…KSDC), and 642-669 (NSPT…VQPS). The span at 602 to 611 (QQSQQSLQQS) shows a compositional bias: low complexity. Polar residues predominate over residues 654 to 669 (DQNAGHSNLNGVVQPS).

Belongs to the enhancer of polycomb family.

The protein resides in the nucleus. Its function is as follows. May play a role in transcription or DNA repair. The polypeptide is Enhancer of polycomb homolog 2 (epc2) (Xenopus tropicalis (Western clawed frog)).